Reading from the N-terminus, the 205-residue chain is Recombination protein RecR (205 aa).

The C4-type zinc-finger motif lies at 59-74 (CARCNTFCEGGLCDIC). Residues 82 to 177 (RRLMVVHMPA…KVSRLSQGIP (96 aa)) enclose the Toprim domain.

This sequence belongs to the RecR family.

Its function is as follows. May play a role in DNA repair. It seems to be involved in an RecBC-independent recombinational process of DNA repair. It may act with RecF and RecO. The sequence is that of Recombination protein RecR from Neisseria meningitidis serogroup A / serotype 4A (strain DSM 15465 / Z2491).